The sequence spans 345 residues: Ribonucleoside-diphosphate reductase small chain 2 (345 aa).

Position 1 is an N-acetylmethionine (Met-1). The active site involves Tyr-131. A phosphoserine mark is found at Ser-169 and Ser-332. Phosphothreonine is present on Thr-334. Ser-336 is modified (phosphoserine). Residue Lys-337 forms a Glycyl lysine isopeptide (Lys-Gly) (interchain with G-Cter in ubiquitin) linkage.

Belongs to the ribonucleoside diphosphate reductase small chain family. In terms of assembly, heterotetramer of two large (R1) and two small (R2) subunits. S.cerevisiae has two different R1 subunits (RNR1 and RNR3) and two different R2 subunits (RNR2 and RNR4). The functional form of the small subunits is a RNR2-RNR4 heterodimer, where RNR2 provides the iron-radical center and RNR4 is required for proper folding of RNR2 and assembly with the large subunits. Under normal growth conditions, the active form of the large subunits is a homodimer of the constitutively expressed RNR1. In damaged cells or cells arrested for DNA synthesis, the reductase consists of multiple species because of the association of the small subunits (RNR2-RNR4) with either the RNR1 homodimer or a heterodimer of RNR1 and the damage-inducible RNR3. Interacts with DIF1.

It is found in the nucleus. The catalysed reaction is a 2'-deoxyribonucleoside 5'-diphosphate + [thioredoxin]-disulfide + H2O = a ribonucleoside 5'-diphosphate + [thioredoxin]-dithiol. Functionally, provides the precursors necessary for DNA synthesis. Catalyzes the biosynthesis of deoxyribonucleotides from the corresponding ribonucleotides. RNR4 is required for proper folding of RNR2 and assembly with the large subunits. This is Ribonucleoside-diphosphate reductase small chain 2 (RNR4) from Saccharomyces cerevisiae (strain ATCC 204508 / S288c) (Baker's yeast).